A 210-amino-acid polypeptide reads, in one-letter code: MQLNKDILLVSIISLFSGVLLGYFQAKCFKRSTITKNKEEVEQIKEIENNNQKEKEKEEKEGDDDDDDDDESESIDGDYDENDDYEIEYDEEIGDCKQVLVIRTDLGMTKGKIIAQCCHASLGARQKALKDSKKVLRQWENFGCAKITLKANSKEELVDLRNKAKELGVVSYLVLDSGHTQIPSGSATVLAVGPAPKEAVDAVTKHLKLY.

Residues Glu40 to Lys60 show a composition bias toward basic and acidic residues. Residues Glu40–Glu81 form a disordered region. Residues Glu61–Glu81 show a composition bias toward acidic residues.

Belongs to the PTH2 family.

The enzyme catalyses an N-acyl-L-alpha-aminoacyl-tRNA + H2O = an N-acyl-L-amino acid + a tRNA + H(+). Its function is as follows. The natural substrate for this enzyme may be peptidyl-tRNAs which drop off the ribosome during protein synthesis. This chain is Probable peptidyl-tRNA hydrolase 2 (pth2), found in Dictyostelium discoideum (Social amoeba).